The sequence spans 206 residues: Small ribosomal subunit protein uS4 (206 aa).

Residues serine 96–lysine 156 enclose the S4 RNA-binding domain.

It belongs to the universal ribosomal protein uS4 family. Part of the 30S ribosomal subunit. Contacts protein S5. The interaction surface between S4 and S5 is involved in control of translational fidelity.

Its function is as follows. One of the primary rRNA binding proteins, it binds directly to 16S rRNA where it nucleates assembly of the body of the 30S subunit. In terms of biological role, with S5 and S12 plays an important role in translational accuracy. This chain is Small ribosomal subunit protein uS4, found in Buchnera aphidicola subsp. Acyrthosiphon pisum (strain 5A).